The sequence spans 65 residues: Large ribosomal subunit protein bL31 (65 aa).

Cysteine 16, cysteine 18, cysteine 36, and cysteine 39 together coordinate Zn(2+).

This sequence belongs to the bacterial ribosomal protein bL31 family. Type A subfamily. In terms of assembly, part of the 50S ribosomal subunit. Zn(2+) serves as cofactor.

In terms of biological role, binds the 23S rRNA. The sequence is that of Large ribosomal subunit protein bL31 from Brevibacillus brevis (strain 47 / JCM 6285 / NBRC 100599).